The chain runs to 248 residues: Neurotrophic factor BDNF precursor form (248 aa).

The first 18 residues, M1–A18, serve as a signal peptide directing secretion. Residues A19 to R129 constitute a propeptide that is removed on maturation. N122 carries an N-linked (GlcNAc...) asparagine glycan. Disulfide bonds link C142-C209, C187-C238, and C197-C240.

Belongs to the NGF-beta family. In terms of assembly, monomers and homodimers. Binds to NTRK2/TRKB. Can form heterodimers with other neurotrophin family members, such as NTF3 and NTF4 (in vitro), but the physiological relevance of this is not clear. BDNF precursor form: interacts with the heterodimer formed by NGFR and SORCS2. Mature BDNF has much lower affinity for the heterodimer formed by NGFR and SORCS2. Post-translationally, N-glycosylated and glycosulfated, contrary to mature BDNF. Mature BDNF is produced by proteolytic removal of the propeptide, catalyzed by a FURIN family member. In addition, the precursor form is proteolytically cleaved within the propeptide, but this is not an obligatory intermediate for the production of mature BDNF. Can be converted into mature BDNF by plasmin (PLG).

It localises to the secreted. Functionally, important signaling molecule that activates signaling cascades downstream of NTRK2. During development, promotes the survival and differentiation of selected neuronal populations of the peripheral and central nervous systems. Participates in axonal growth, pathfinding and in the modulation of dendritic growth and morphology. Major regulator of synaptic transmission and plasticity at adult synapses in many regions of the CNS. The versatility of BDNF is emphasized by its contribution to a range of adaptive neuronal responses including long-term potentiation (LTP), long-term depression (LTD), certain forms of short-term synaptic plasticity, as well as homeostatic regulation of intrinsic neuronal excitability. Its function is as follows. Important signaling molecule that activates signaling cascades downstream of NTRK2. Activates signaling cascades via the heterodimeric receptor formed by NGFR and SORCS2. Signaling via NGFR and SORCS2 plays a role in synaptic plasticity and long-term depression (LTD). Binding to NGFR and SORCS2 promotes neuronal apoptosis. Promotes neuronal growth cone collapse. This chain is Neurotrophic factor BDNF precursor form (BDNF), found in Lipotes vexillifer (Yangtze river dolphin).